Here is a 536-residue protein sequence, read N- to C-terminus: Prolyl 3-hydroxylase sudestada1 (536 aa).

The interval 1 to 35 (METSSSSPVKPRRKDKDEDGRAEQEDSADQVGEPH) is disordered. Residues 14 to 24 (KDKDEDGRAEQ) show a composition bias toward basic and acidic residues. Residues 165 to 275 (KLDYVSASCS…RLTINGWFHG (111 aa)) enclose the Fe2OG dioxygenase domain. Fe cation contacts are provided by His185 and Asp187. Tyr199 provides a ligand contact to 2-oxoglutarate. Fe cation is bound at residue His254. Arg266 provides a ligand contact to 2-oxoglutarate. The disordered stretch occupies residues 467 to 486 (PTAKAPTDGRRSDYDDEEED).

The protein belongs to the TPA1 family. In terms of assembly, monomer. Fe(2+) serves as cofactor. It depends on L-ascorbate as a cofactor. In third-instar larval tissues,highly expressed in the fat body, with significant expression in other organs including the brain, salivary glands, imaginal disks and gut.

The protein localises to the nucleus. It localises to the cytoplasm. The catalysed reaction is [ribosomal protein uS12]-L-proline + 2-oxoglutarate + O2 = [ribosomal protein uS12]-(3S)-3-hydroxy-L-proline + succinate + CO2. Functionally, prolyl 3-hydroxylase that catalyzes 3-hydroxylation of 'Pro-62' of small ribosomal subunit uS12 (RpS23), thereby regulating protein translation termination efficiency. In Drosophila melanogaster (Fruit fly), this protein is Prolyl 3-hydroxylase sudestada1 (sud1).